The following is a 512-amino-acid chain: 23S rRNA (uracil(1939)-C(5))-methyltransferase RlmD (512 aa).

The span at 1–14 (MQPTDSKTSTSDTT) shows a compositional bias: low complexity. Residues 1-45 (MQPTDSKTSTSDTTEQPNETQTITIPPSKKKSKPSSKTRRRLKDA) are disordered. Polar residues predominate over residues 15 to 25 (EQPNETQTITI). The segment covering 28–42 (SKKKSKPSSKTRRRL) has biased composition (basic residues). The TRAM domain maps to 41–113 (RLKDAEPLPF…TSFEEGDAVN (73 aa)). Residues Cys127, Cys133, Cys136, and Cys215 each coordinate [4Fe-4S] cluster. Residues Gln340, Phe369, Asn374, Glu393, Asp420, and Asp441 each contribute to the S-adenosyl-L-methionine site. The active-site Nucleophile is the Cys467.

Belongs to the class I-like SAM-binding methyltransferase superfamily. RNA M5U methyltransferase family. RlmD subfamily.

It carries out the reaction uridine(1939) in 23S rRNA + S-adenosyl-L-methionine = 5-methyluridine(1939) in 23S rRNA + S-adenosyl-L-homocysteine + H(+). Its function is as follows. Catalyzes the formation of 5-methyl-uridine at position 1939 (m5U1939) in 23S rRNA. The sequence is that of 23S rRNA (uracil(1939)-C(5))-methyltransferase RlmD from Psychrobacter arcticus (strain DSM 17307 / VKM B-2377 / 273-4).